A 220-amino-acid polypeptide reads, in one-letter code: Large ribosomal subunit protein uL1 (220 aa).

Belongs to the universal ribosomal protein uL1 family. Part of the 50S ribosomal subunit.

Functionally, binds directly to 23S rRNA. The L1 stalk is quite mobile in the ribosome, and is involved in E site tRNA release. Protein L1 is also a translational repressor protein, it controls the translation of the L11 operon by binding to its mRNA. This chain is Large ribosomal subunit protein uL1, found in Ehrlichia canis (strain Jake).